A 438-amino-acid chain; its full sequence is ATP-dependent protease ATPase subunit HslU (438 aa).

ATP-binding positions include valine 18, glycine 60–glutamate 65, aspartate 252, glutamate 317, and arginine 389.

The protein belongs to the ClpX chaperone family. HslU subfamily. In terms of assembly, a double ring-shaped homohexamer of HslV is capped on each side by a ring-shaped HslU homohexamer. The assembly of the HslU/HslV complex is dependent on binding of ATP.

The protein resides in the cytoplasm. Its function is as follows. ATPase subunit of a proteasome-like degradation complex; this subunit has chaperone activity. The binding of ATP and its subsequent hydrolysis by HslU are essential for unfolding of protein substrates subsequently hydrolyzed by HslV. HslU recognizes the N-terminal part of its protein substrates and unfolds these before they are guided to HslV for hydrolysis. The sequence is that of ATP-dependent protease ATPase subunit HslU from Saccharophagus degradans (strain 2-40 / ATCC 43961 / DSM 17024).